We begin with the raw amino-acid sequence, 328 residues long: Biotin synthase (328 aa).

Positions 48–275 (NRIQLSKLLN…KSHVRLTAGR (228 aa)) constitute a Radical SAM core domain. Residues cysteine 63, cysteine 67, and cysteine 70 each contribute to the [4Fe-4S] cluster site. Cysteine 107, cysteine 138, cysteine 198, and arginine 270 together coordinate [2Fe-2S] cluster.

This sequence belongs to the radical SAM superfamily. Biotin synthase family. Homodimer. [4Fe-4S] cluster serves as cofactor. It depends on [2Fe-2S] cluster as a cofactor.

The catalysed reaction is (4R,5S)-dethiobiotin + (sulfur carrier)-SH + 2 reduced [2Fe-2S]-[ferredoxin] + 2 S-adenosyl-L-methionine = (sulfur carrier)-H + biotin + 2 5'-deoxyadenosine + 2 L-methionine + 2 oxidized [2Fe-2S]-[ferredoxin]. It functions in the pathway cofactor biosynthesis; biotin biosynthesis; biotin from 7,8-diaminononanoate: step 2/2. Functionally, catalyzes the conversion of dethiobiotin (DTB) to biotin by the insertion of a sulfur atom into dethiobiotin via a radical-based mechanism. This is Biotin synthase from Brucella abortus (strain S19).